Consider the following 252-residue polypeptide: Isoprenyl transferase 2 (252 aa).

Asp26 is a catalytic residue. Asp26 is a Mg(2+) binding site. Substrate-binding positions include 27–30 (GNGR), Trp31, Arg39, His43, and 71–73 (SSE). Asn74 acts as the Proton acceptor in catalysis. Substrate is bound by residues Trp75, Arg77, Arg194, and 200 to 202 (RLS). Glu213 is a binding site for Mg(2+).

Belongs to the UPP synthase family. In terms of assembly, homodimer. The cofactor is Mg(2+).

Its function is as follows. Catalyzes the condensation of isopentenyl diphosphate (IPP) with allylic pyrophosphates generating different type of terpenoids. In Bradyrhizobium diazoefficiens (strain JCM 10833 / BCRC 13528 / IAM 13628 / NBRC 14792 / USDA 110), this protein is Isoprenyl transferase 2.